Here is a 177-residue protein sequence, read N- to C-terminus: ATP synthase subunit delta (177 aa).

This sequence belongs to the ATPase delta chain family. F-type ATPases have 2 components, F(1) - the catalytic core - and F(0) - the membrane proton channel. F(1) has five subunits: alpha(3), beta(3), gamma(1), delta(1), epsilon(1). F(0) has three main subunits: a(1), b(2) and c(10-14). The alpha and beta chains form an alternating ring which encloses part of the gamma chain. F(1) is attached to F(0) by a central stalk formed by the gamma and epsilon chains, while a peripheral stalk is formed by the delta and b chains.

It localises to the cell inner membrane. In terms of biological role, f(1)F(0) ATP synthase produces ATP from ADP in the presence of a proton or sodium gradient. F-type ATPases consist of two structural domains, F(1) containing the extramembraneous catalytic core and F(0) containing the membrane proton channel, linked together by a central stalk and a peripheral stalk. During catalysis, ATP synthesis in the catalytic domain of F(1) is coupled via a rotary mechanism of the central stalk subunits to proton translocation. Its function is as follows. This protein is part of the stalk that links CF(0) to CF(1). It either transmits conformational changes from CF(0) to CF(1) or is implicated in proton conduction. This chain is ATP synthase subunit delta, found in Enterobacter sp. (strain 638).